The primary structure comprises 165 residues: Phosphopantetheine adenylyltransferase (165 aa).

Ser-10 lines the substrate pocket. ATP-binding positions include 10–11 (SF) and His-18. Residues Lys-42, Thr-79, and Arg-93 each contribute to the substrate site. ATP is bound by residues 94 to 96 (GLR), Glu-104, and 129 to 135 (VRPITAT).

It belongs to the bacterial CoaD family. As to quaternary structure, homohexamer. Requires Mg(2+) as cofactor.

The protein resides in the cytoplasm. It carries out the reaction (R)-4'-phosphopantetheine + ATP + H(+) = 3'-dephospho-CoA + diphosphate. It participates in cofactor biosynthesis; coenzyme A biosynthesis; CoA from (R)-pantothenate: step 4/5. Functionally, reversibly transfers an adenylyl group from ATP to 4'-phosphopantetheine, yielding dephospho-CoA (dPCoA) and pyrophosphate. This chain is Phosphopantetheine adenylyltransferase, found in Afipia carboxidovorans (strain ATCC 49405 / DSM 1227 / KCTC 32145 / OM5) (Oligotropha carboxidovorans).